The sequence spans 221 residues: Oxaloacetate tautomerase FAHD1, mitochondrial (221 aa).

The N-terminal 24 residues, 1-24, are a transit peptide targeting the mitochondrion; it reads MAASRPLSRFWEWGKNIVCVGRNY. Position 22 (Arg22) interacts with oxalate. Ser37 bears the Phosphoserine mark. 3 residues coordinate Mg(2+): Glu68, Glu70, and Asp99. Lys110 is modified (N6-acetyllysine). Lys112 is subject to N6-succinyllysine. Lys120 and Thr189 together coordinate oxalate.

This sequence belongs to the FAH family. As to quaternary structure, homodimer. Mg(2+) serves as cofactor. It depends on Mn(2+) as a cofactor. In terms of tissue distribution, ubiquitous (at protein level).

Its subcellular location is the mitochondrion. It localises to the cytoplasm. The protein localises to the cytosol. It carries out the reaction oxaloacetate = enol-oxaloacetate. The catalysed reaction is oxaloacetate + H(+) = pyruvate + CO2. It catalyses the reaction a 3-acylpyruvate + H2O = a carboxylate + pyruvate + H(+). The enzyme catalyses acetylpyruvate + H2O = acetate + pyruvate + H(+). It carries out the reaction 3-fumarylpyruvate + H2O = fumarate + pyruvate + H(+). Its activity is regulated as follows. Oxaloacetate decarboxylation is competitively inhibited by oxalate. Its function is as follows. Tautomerase that converts enol-oxaloacetate, a strong inhibitor of succinate dehydrogenase, to the physiological keto form of oxaloacetate. It is thereby required to maximize aerobic respiration efficiency by preventing succinate dehydrogenase inhibition. Also acts as a weak oxaloacetate decarboxylase (ODx), catalyzing the decarboxylation of oxaloacetate (OAA) to pyruvate and CO(2), and as such is likely a regulatory enzyme in the TCA cycle. Also displays acylpyruvase activity, being able to hydrolyze acetylpyruvate and fumarylpyruvate in vitro. Exhibits only a weak hydrolase activity on methylacetopyruvate and acetylacetone, and no activity toward acetoacetyl-CoA. This Homo sapiens (Human) protein is Oxaloacetate tautomerase FAHD1, mitochondrial.